A 309-amino-acid chain; its full sequence is Wall-associated proteinase (309 aa).

Asn-190 and Asn-295 each carry an N-linked (GlcNAc...) asparagine glycan.

The protein localises to the secreted. The protein resides in the cell wall. Its subcellular location is the membrane. Its function is as follows. May participate in wall plasticization and/or intussusception or in cell wall turnover. The sequence is that of Wall-associated proteinase from Coccidioides immitis (strain RS) (Valley fever fungus).